A 354-amino-acid polypeptide reads, in one-letter code: (R,R)-butanediol dehydrogenase (354 aa).

One can recognise an Enoyl reductase (ER) domain in the interval 10–350; the sequence is GDIRIEDIPE…NNESAVKIIV (341 aa). The Zn(2+) site is built by Cys37, His71, and Glu157.

It belongs to the zinc-containing alcohol dehydrogenase family. Requires Zn(2+) as cofactor.

The catalysed reaction is (R,R)-butane-2,3-diol + NAD(+) = (R)-acetoin + NADH + H(+). It carries out the reaction (S)-acetoin + NAD(+) = diacetyl + NADH + H(+). NAD-dependent butanediol dehydrogenase which catalyzes the oxidation of (R,R)-butane-2,3-diol to (3R)-acetoin and of meso-butane-2,3-diol to (3S)-acetoin. Preferentially oxidizes (R,R)-butane-2,3-diol, with a catalytic efficiency approximately fourfold higher than with meso-butane-2,3-diol. Shows a very low activity with (S,S)-butane-2,3-diol. Can also catalyze the reduction of (3R/3S)-acetoin and diacetyl in the presence of NADH. The polypeptide is (R,R)-butanediol dehydrogenase (Neisseria gonorrhoeae (strain ATCC 700825 / FA 1090)).